The chain runs to 874 residues: MKTTSEIRQSFLDFFHSKGHTVVPSSSLVPENDPTLLFTNAGMNQFKDVFLGLEKRPYTRATTAQRCVRAGGKHNDLENVGYTARHHTFFEMMGNFSFGDYFKHDAIQFGWEYLTSPQWLGLPKEKLYVTVYETDDEAYDIWNKIVGVPTDHIIRIGDNKGAPYASDNFWAMGDTGPCGPCTEIFYDHGETFWGGLPGSPEEDGDRYIEVWNIVFMQFNRLADGTMEKLPKPSVDTGMGLERMTAVMQHVNSNYETDIFQTLIKEVAGLLNVSDLDNKSLRVVADHIRACSYLIADGVVPSNEGRGYVLRRIIRRAVRHGNLLGAKEAFFYKLVPTLATVMGHAGEVLTQKQAHIQKTLKAEEEQFARTLERGLALLEDALTKVENNTLSGEVAFKLYDTYGFPLDLTADVCRERELTIDEAGFEAEMTAQRERAKASSNFGTDYNNVIKVEGQTDFIGYDNLEAQATIVGLFSNGKAVDTIQSGESAVIILDQTPFYAEMGGQVGDSGLISTEICNFTVNDTQKYGQVFGHIGQLTSGSLSIGDKVTATVHATRRIAITANHSATHLLHSALREVLGDHVAQKGSLVSENILRFDFSQPEAISKSQLEEIERIVNRKIRENIQVTIETMDIESAKKKGAMALFGEKYGDVVRVVGMTEFSIELCGGTHVQRTGDIGLFKLVSEGAVAAGIRRVEAVTAETAIEWLHNQQKVLQQSAEFLKADSNSLVEKIQQLQDKAKRTEKELQQLKDKLAAQAGSELVKQANKINGVNVVVQKLENVEVKSLRTMVDDLKNQLESAIVVFGTVADEKVNLIVGVTKDLSSKVNAGELVGAMAQQVGGKGGGRADMAMAGGSEPQNLDNALKFAEEWIQAKL.

Zn(2+)-binding residues include His563, His567, Cys665, and His669.

Belongs to the class-II aminoacyl-tRNA synthetase family. Zn(2+) serves as cofactor.

The protein localises to the cytoplasm. It catalyses the reaction tRNA(Ala) + L-alanine + ATP = L-alanyl-tRNA(Ala) + AMP + diphosphate. Functionally, catalyzes the attachment of alanine to tRNA(Ala) in a two-step reaction: alanine is first activated by ATP to form Ala-AMP and then transferred to the acceptor end of tRNA(Ala). Also edits incorrectly charged Ser-tRNA(Ala) and Gly-tRNA(Ala) via its editing domain. This Actinobacillus pleuropneumoniae serotype 3 (strain JL03) protein is Alanine--tRNA ligase.